The primary structure comprises 31 residues: GNCLELGEYCDGSKDDCQCCRDNAYCGCDIF.

In terms of processing, disulfide bonds are present. As to expression, expressed by the venom gland.

The protein localises to the secreted. Functionally, omega-agatoxins are antagonists of voltage-gated calcium channels (Cav). The polypeptide is U14-ctenitoxin-Co1a (Ctenus ornatus (Brazilian spider)).